The following is a 475-amino-acid chain: MNIQKDDWMDRRKIVRRNTQSSASTYVLEKLHIDLVIEILSRLSAKSIAICRCVSKQWNSLLVSQDFVESFLRSSLSRPRIWFTFRFDGKWNFFSSPQPQKFGNNLSVEATEHHMGSYENWYMKSCQSVHGFIFMSYNSKGMTDRTQVIWNPCTRQLITLPKLEPENLDFNSFFAYDPTEKQFKVLCMTVVNKQQTTSYKYQVLTLGTGPLLWRNIECPFMYRLRDKSNRGICINGVLYFIGWIKCSTMIIICFDVSSEKFSFIKIENAFIVTLINYRGKLGVYLVVYGSPRGEVWVLDDTKNDNWSKHNFVCPYSGQENSTWATGTGELVWPSSPWTQPFYVVYYNLERQSFRRVDIKGMENKVSTGKDRYDGFFTFTNHVENLMVLPLHKKTIPIQDTLTNRVMERETLTRSPLTQTAYASSYSTTRSYKSSGKRCSDRSIGEDEQDDIGEKRGDQAAERRERSTKRGKHEVH.

An F-box domain is found at 25–71 (TYVLEKLHIDLVIEILSRLSAKSIAICRCVSKQWNSLLVSQDFVESF). A compositionally biased stretch (low complexity) spans 423-433 (SSYSTTRSYKS). Residues 423-475 (SSYSTTRSYKSSGKRCSDRSIGEDEQDDIGEKRGDQAAERRERSTKRGKHEVH) are disordered. Residues 451-464 (IGEKRGDQAAERRE) show a composition bias toward basic and acidic residues. Basic residues predominate over residues 465 to 475 (RSTKRGKHEVH).

This Arabidopsis thaliana (Mouse-ear cress) protein is Putative F-box protein At1g46840.